A 347-amino-acid chain; its full sequence is Dihydroorotase (347 aa).

Zn(2+) contacts are provided by H17 and H19. Substrate contacts are provided by residues 19–21 (HLR) and N45. K103, H140, and H178 together coordinate Zn(2+). Residue K103 is modified to N6-carboxylysine. H140 is a binding site for substrate. Position 223 (L223) interacts with substrate. Zn(2+) is bound at residue D251. The active site involves D251. Positions 255 and 267 each coordinate substrate.

The protein belongs to the metallo-dependent hydrolases superfamily. DHOase family. Class II DHOase subfamily. Homodimer. It depends on Zn(2+) as a cofactor.

It carries out the reaction (S)-dihydroorotate + H2O = N-carbamoyl-L-aspartate + H(+). The protein operates within pyrimidine metabolism; UMP biosynthesis via de novo pathway; (S)-dihydroorotate from bicarbonate: step 3/3. Its function is as follows. Catalyzes the reversible cyclization of carbamoyl aspartate to dihydroorotate. This is Dihydroorotase from Citrobacter koseri (strain ATCC BAA-895 / CDC 4225-83 / SGSC4696).